Reading from the N-terminus, the 412-residue chain is CCA-adding enzyme (412 aa).

The ATP site is built by Ser41 and Lys44. 2 residues coordinate CTP: Ser41 and Lys44. 3 residues coordinate Mg(2+): Asp53, Asp55, and Asp106. Positions 129, 149, and 158 each coordinate ATP. Residues His129, Lys149, and Tyr158 each coordinate CTP.

This sequence belongs to the tRNA nucleotidyltransferase/poly(A) polymerase family. Archaeal CCA-adding enzyme subfamily. As to quaternary structure, homodimer. Mg(2+) serves as cofactor.

It catalyses the reaction a tRNA precursor + 2 CTP + ATP = a tRNA with a 3' CCA end + 3 diphosphate. The enzyme catalyses a tRNA with a 3' CCA end + 2 CTP + ATP = a tRNA with a 3' CCACCA end + 3 diphosphate. Its function is as follows. Catalyzes the addition and repair of the essential 3'-terminal CCA sequence in tRNAs without using a nucleic acid template. Adds these three nucleotides in the order of C, C, and A to the tRNA nucleotide-73, using CTP and ATP as substrates and producing inorganic pyrophosphate. tRNA 3'-terminal CCA addition is required both for tRNA processing and repair. Also involved in tRNA surveillance by mediating tandem CCA addition to generate a CCACCA at the 3' terminus of unstable tRNAs. While stable tRNAs receive only 3'-terminal CCA, unstable tRNAs are marked with CCACCA and rapidly degraded. This chain is CCA-adding enzyme, found in Saccharolobus solfataricus (strain ATCC 35092 / DSM 1617 / JCM 11322 / P2) (Sulfolobus solfataricus).